The following is a 386-amino-acid chain: MPGLTSIRTSEGKIEIVNQLLLPHTTEFIEISTIEQAHDAIKSMKIRGAPAIASLAALTIASHLSRALQADPSPDFLTSPLTLQEHVEGHLSYINTARPTAVNLGAATRRLSNILEQSVRAGKDARAIAEDLIREGKEIDEEDVGRNKQMSRHGAEWLLEQWAAKGLSGSNLNVMTVCNTGSLATSGYGTALGLITHLHETGRLQRAFYTQSTPYHQGSRLTAFELQTLNIPSTMLCDSMVGSLFQSHGIHAVAVGADRITRDGDTANKVGTYNAAVLAARHKIPFIVVAPVSTVDLDIADGSSIPIEHRPALEACVVRGALYPVRTDAEGLKEQATVMITPEGLDGVYNPSFDVTPAELITAIVTEKGVAVKRDGESTFDLTSIV.

Catalysis depends on aspartate 258, which acts as the Proton donor.

This sequence belongs to the eIF-2B alpha/beta/delta subunits family. MtnA subfamily.

Its subcellular location is the cytoplasm. The protein resides in the nucleus. The enzyme catalyses 5-(methylsulfanyl)-alpha-D-ribose 1-phosphate = 5-(methylsulfanyl)-D-ribulose 1-phosphate. The protein operates within amino-acid biosynthesis; L-methionine biosynthesis via salvage pathway; L-methionine from S-methyl-5-thio-alpha-D-ribose 1-phosphate: step 1/6. Functionally, catalyzes the interconversion of methylthioribose-1-phosphate (MTR-1-P) into methylthioribulose-1-phosphate (MTRu-1-P). The polypeptide is Methylthioribose-1-phosphate isomerase (Postia placenta (strain ATCC 44394 / Madison 698-R) (Brown rot fungus)).